The sequence spans 29 residues: Cyclotide mobo-A (29 aa).

Residues 1–29 (GFPTCGETCTLGTCNTPGCTCSWPICTRN) constitute a cross-link (cyclopeptide (Gly-Asn)). 3 disulfide bridges follow: cysteine 5–cysteine 19, cysteine 9–cysteine 21, and cysteine 14–cysteine 26.

The protein belongs to the cyclotide family. Moebius subfamily. This is a cyclic peptide.

Its function is as follows. Probably participates in a plant defense mechanism. This is Cyclotide mobo-A from Melicytus obovatus (Hymenanthera obovata).